The primary structure comprises 140 residues: Small ribosomal subunit protein uS11 (140 aa).

The disordered stretch occupies residues 116–140 (GRVEDVTPIPHDGTRPKGGRRGRRV).

Belongs to the universal ribosomal protein uS11 family. In terms of assembly, part of the 30S ribosomal subunit.

Its function is as follows. Located on the platform of the 30S subunit. This Thermococcus kodakarensis (strain ATCC BAA-918 / JCM 12380 / KOD1) (Pyrococcus kodakaraensis (strain KOD1)) protein is Small ribosomal subunit protein uS11.